The following is a 344-amino-acid chain: GTPase Obg (344 aa).

The region spanning 1–159 (MKFLDEAKVY…MWLILRLKLI (159 aa)) is the Obg domain. The region spanning 160 to 327 (ADAGLVGLPN…ALRAIQAQLD (168 aa)) is the OBG-type G domain. Residues 166-173 (GLPNAGKS), 191-195 (FTTLH), 212-215 (DIPG), 279-282 (SKAD), and 308-310 (SAA) each bind GTP. Residues S173 and T193 each coordinate Mg(2+).

It belongs to the TRAFAC class OBG-HflX-like GTPase superfamily. OBG GTPase family. In terms of assembly, monomer. Requires Mg(2+) as cofactor.

The protein localises to the cytoplasm. Its function is as follows. An essential GTPase which binds GTP, GDP and possibly (p)ppGpp with moderate affinity, with high nucleotide exchange rates and a fairly low GTP hydrolysis rate. Plays a role in control of the cell cycle, stress response, ribosome biogenesis and in those bacteria that undergo differentiation, in morphogenesis control. This Methylorubrum extorquens (strain CM4 / NCIMB 13688) (Methylobacterium extorquens) protein is GTPase Obg.